Reading from the N-terminus, the 938-residue chain is TFIIH basal transcription factor complex helicase/translocase XPB subunit (938 aa).

Positions 394–562 constitute a Helicase ATP-binding domain; that stretch reads FRSGNKAHQG…DLRHLVGPKL (169 aa). 407 to 414 is a binding site for ATP; sequence LPCGAGKT. The short motif at 515 to 518 is the DEVH box element; that stretch reads DEVH. One can recognise a Helicase C-terminal domain in the interval 627-781; the sequence is WCTQALLEFH…SYRVLQSDMV (155 aa).

The protein belongs to the helicase family. RAD25/XPB subfamily. Component of the 7-subunit TFIIH core complex composed of XPB, XPD, SSL1, TFB1, TFB2, TFB4 and TFB5.

The enzyme catalyses Couples ATP hydrolysis with the unwinding of duplex DNA by translocating in the 3'-5' direction.. It carries out the reaction ATP + H2O = ADP + phosphate + H(+). Its function is as follows. ATP-dependent 3'-5' DNA helicase/translocase; binds dsDNA rather than ssDNA, unzipping it in a translocase rather than classical helicase activity. Component of the general transcription factor IIH (TFIIH) core complex, involved in spliced leader RNA (SL RNA) gene transcription by RNA polymerase II. TFIIH has an essential role in transcription initiation. When the pre-initiation complex (PIC) has been established, TFIIH is required for promoter opening and promoter escape. The ATPase activity of XPB is required for promoter opening and promoter escape. The protein is TFIIH basal transcription factor complex helicase/translocase XPB subunit of Trypanosoma brucei brucei (strain 927/4 GUTat10.1).